The chain runs to 2138 residues: DNA polymerase epsilon catalytic subunit B (2138 aa).

A Nuclear localization signal 1 motif is present at residues 1224 to 1231 (EKRKWKMT). Residues C2015, C2018, C2040, and C2045 each contribute to the Zn(2+) site. The CysA-type zinc finger occupies 2015–2045 (CSNCGAYRDLDFCRDSALLTEKEWSCADPQC). Residues C2076, C2079, C2091, and C2093 each contribute to the [4Fe-4S] cluster site. Residues 2076–2093 (CNRCNQVKAAHLTEQCEC) carry the CysB motif motif. Residues 2107–2114 (HKRIEIFL) carry the Nuclear localization signal 2 motif.

Belongs to the DNA polymerase type-B family. In terms of assembly, heterotetramer. Requires [4Fe-4S] cluster as cofactor. Mostly expressed at low levels in inflorescence (floral meristem and flowers until anthesis), and, to a lower extent, in seeds.

The protein localises to the nucleus. The enzyme catalyses DNA(n) + a 2'-deoxyribonucleoside 5'-triphosphate = DNA(n+1) + diphosphate. Its function is as follows. DNA polymerase II, which participates in chromosomal DNA replication. Involved in the determination of cell fate during plant embryogenesis. Contributes to the flowering time repression. The protein is DNA polymerase epsilon catalytic subunit B (POL2B) of Arabidopsis thaliana (Mouse-ear cress).